A 385-amino-acid chain; its full sequence is 4-hydroxy-3-methylbut-2-en-1-yl diphosphate synthase (flavodoxin) 2 (385 aa).

Positions 280, 283, 315, and 322 each coordinate [4Fe-4S] cluster.

It belongs to the IspG family. The cofactor is [4Fe-4S] cluster.

It catalyses the reaction (2E)-4-hydroxy-3-methylbut-2-enyl diphosphate + oxidized [flavodoxin] + H2O + 2 H(+) = 2-C-methyl-D-erythritol 2,4-cyclic diphosphate + reduced [flavodoxin]. It participates in isoprenoid biosynthesis; isopentenyl diphosphate biosynthesis via DXP pathway; isopentenyl diphosphate from 1-deoxy-D-xylulose 5-phosphate: step 5/6. Its function is as follows. Converts 2C-methyl-D-erythritol 2,4-cyclodiphosphate (ME-2,4cPP) into 1-hydroxy-2-methyl-2-(E)-butenyl 4-diphosphate. This is 4-hydroxy-3-methylbut-2-en-1-yl diphosphate synthase (flavodoxin) 2 from Streptomyces coelicolor (strain ATCC BAA-471 / A3(2) / M145).